The following is a 331-amino-acid chain: 4-hydroxythreonine-4-phosphate dehydrogenase (331 aa).

Substrate-binding residues include His137 and Thr138. Residues His167, His212, and His267 each coordinate a divalent metal cation. Positions 275, 284, and 293 each coordinate substrate.

It belongs to the PdxA family. In terms of assembly, homodimer. The cofactor is Zn(2+). Mg(2+) serves as cofactor. Requires Co(2+) as cofactor.

It localises to the cytoplasm. The catalysed reaction is 4-(phosphooxy)-L-threonine + NAD(+) = 3-amino-2-oxopropyl phosphate + CO2 + NADH. It functions in the pathway cofactor biosynthesis; pyridoxine 5'-phosphate biosynthesis; pyridoxine 5'-phosphate from D-erythrose 4-phosphate: step 4/5. Its function is as follows. Catalyzes the NAD(P)-dependent oxidation of 4-(phosphooxy)-L-threonine (HTP) into 2-amino-3-oxo-4-(phosphooxy)butyric acid which spontaneously decarboxylates to form 3-amino-2-oxopropyl phosphate (AHAP). The polypeptide is 4-hydroxythreonine-4-phosphate dehydrogenase (Yersinia pestis bv. Antiqua (strain Angola)).